Consider the following 62-residue polypeptide: Large ribosomal subunit protein bL28 (62 aa).

A disordered region spans residues Met1–Thr28. Polar residues predominate over residues Ser14 to Lys26.

Belongs to the bacterial ribosomal protein bL28 family.

In Bacillus licheniformis (strain ATCC 14580 / DSM 13 / JCM 2505 / CCUG 7422 / NBRC 12200 / NCIMB 9375 / NCTC 10341 / NRRL NRS-1264 / Gibson 46), this protein is Large ribosomal subunit protein bL28.